Reading from the N-terminus, the 341-residue chain is Sulfate/thiosulfate import ATP-binding protein CysA 2 (341 aa).

The 233-residue stretch at 3–235 (IRLENVVKTF…PNSSFVMRFL (233 aa)) folds into the ABC transporter domain. 35 to 42 (GPSGSGKT) contributes to the ATP binding site.

Belongs to the ABC transporter superfamily. Sulfate/tungstate importer (TC 3.A.1.6) family. As to quaternary structure, the complex is composed of two ATP-binding proteins (CysA), two transmembrane proteins (CysT and CysW) and a solute-binding protein (CysP).

Its subcellular location is the cell inner membrane. It carries out the reaction sulfate(out) + ATP + H2O = sulfate(in) + ADP + phosphate + H(+). The enzyme catalyses thiosulfate(out) + ATP + H2O = thiosulfate(in) + ADP + phosphate + H(+). In terms of biological role, part of the ABC transporter complex CysAWTP involved in sulfate/thiosulfate import. Responsible for energy coupling to the transport system. This is Sulfate/thiosulfate import ATP-binding protein CysA 2 from Agrobacterium fabrum (strain C58 / ATCC 33970) (Agrobacterium tumefaciens (strain C58)).